We begin with the raw amino-acid sequence, 274 residues long: Lectin-like protein (274 aa).

The N-terminal stretch at 1–19 is a signal peptide; that stretch reads MKIHKLCFLALLLAHTTSA. The interval 28 to 268 is legume-lectin like; it reads TSELVFLGDA…RHDIWSWTFQ (241 aa). Residues 62 to 81 form a disordered region; the sequence is SHGQSLWSTPVPFKPSSNSS. Residue Asn129 is glycosylated (N-linked (GlcNAc...) asparagine). Ser238 is subject to Phosphoserine.

This sequence belongs to the leguminous lectin family. In terms of tissue distribution, expressed in seedlings and leaves of adult plants.

The protein localises to the secreted. It is found in the extracellular space. The protein resides in the apoplast. Its subcellular location is the cell membrane. Functionally, plays a positive role in the effector-triggered immunity (ETI) response. Involved in salicylic acid (SA)-mediated processes occurring in ETI response, but is not involved in the autophagy process. Promotes systemic rather than local immunity. Essential for systemic acquired resistance (SAR), but not necessary for immune signaling downstream of SA. May act in parallel with SA. This Arabidopsis thaliana (Mouse-ear cress) protein is Lectin-like protein.